The following is a 221-amino-acid chain: GTP-binding nuclear protein Ran-1 (221 aa).

Residues Asp10 to Asp174 form the Small GTPase Ran-type domain. Asp21–Thr28 provides a ligand contact to GTP. The segment at Lys40–Val48 is switch-I. Residues Gly71, Asn125–Asp128, and Ser153–Lys155 contribute to the GTP site. Residues Gly71–Gln87 are switch-II.

The protein belongs to the small GTPase superfamily. Ran family. Found in a nuclear export complex with RanGTP, exportin and pre-miRNA.

The protein localises to the nucleus. In terms of biological role, GTP-binding protein involved in nucleocytoplasmic transport. Required for the import of protein into the nucleus and also for RNA export. Involved in chromatin condensation and control of cell cycle. This is GTP-binding nuclear protein Ran-1 (RAN1) from Oryza sativa subsp. indica (Rice).